The sequence spans 225 residues: Phosphatidylserine decarboxylase proenzyme (225 aa).

S188 (schiff-base intermediate with substrate; via pyruvic acid) is an active-site residue. S188 is subject to Pyruvic acid (Ser); by autocatalysis.

The protein belongs to the phosphatidylserine decarboxylase family. PSD-A subfamily. In terms of assembly, heterodimer of a large membrane-associated beta subunit and a small pyruvoyl-containing alpha subunit. Pyruvate serves as cofactor. Post-translationally, is synthesized initially as an inactive proenzyme. Formation of the active enzyme involves a self-maturation process in which the active site pyruvoyl group is generated from an internal serine residue via an autocatalytic post-translational modification. Two non-identical subunits are generated from the proenzyme in this reaction, and the pyruvate is formed at the N-terminus of the alpha chain, which is derived from the carboxyl end of the proenzyme. The post-translation cleavage follows an unusual pathway, termed non-hydrolytic serinolysis, in which the side chain hydroxyl group of the serine supplies its oxygen atom to form the C-terminus of the beta chain, while the remainder of the serine residue undergoes an oxidative deamination to produce ammonia and the pyruvoyl prosthetic group on the alpha chain.

It localises to the cell membrane. The catalysed reaction is a 1,2-diacyl-sn-glycero-3-phospho-L-serine + H(+) = a 1,2-diacyl-sn-glycero-3-phosphoethanolamine + CO2. Its pathway is phospholipid metabolism; phosphatidylethanolamine biosynthesis; phosphatidylethanolamine from CDP-diacylglycerol: step 2/2. Catalyzes the formation of phosphatidylethanolamine (PtdEtn) from phosphatidylserine (PtdSer). The polypeptide is Phosphatidylserine decarboxylase proenzyme (Parvibaculum lavamentivorans (strain DS-1 / DSM 13023 / NCIMB 13966)).